Consider the following 571-residue polypeptide: Glutamate--tRNA ligase (571 aa).

Positions Pro-110–Ser-120 match the 'HIGH' region motif.

Belongs to the class-I aminoacyl-tRNA synthetase family. Glutamate--tRNA ligase type 2 subfamily.

The protein resides in the cytoplasm. The enzyme catalyses tRNA(Glu) + L-glutamate + ATP = L-glutamyl-tRNA(Glu) + AMP + diphosphate. Functionally, catalyzes the attachment of glutamate to tRNA(Glu) in a two-step reaction: glutamate is first activated by ATP to form Glu-AMP and then transferred to the acceptor end of tRNA(Glu). The chain is Glutamate--tRNA ligase from Methanosarcina barkeri (strain Fusaro / DSM 804).